The following is a 195-amino-acid chain: Probable GTP-binding protein EngB (195 aa).

The EngB-type G domain occupies 24-195; it reads ELPEIALAGR…EAWDAILEKL (172 aa). GTP-binding positions include 32 to 39, 59 to 63, 77 to 80, 144 to 147, and 176 to 178; these read GRSNVGKS, GKTQL, DVPG, TKAD, and FSS. Mg(2+) contacts are provided by Ser-39 and Thr-61.

This sequence belongs to the TRAFAC class TrmE-Era-EngA-EngB-Septin-like GTPase superfamily. EngB GTPase family. Requires Mg(2+) as cofactor.

Necessary for normal cell division and for the maintenance of normal septation. The chain is Probable GTP-binding protein EngB from Streptococcus pneumoniae (strain ATCC 700669 / Spain 23F-1).